The chain runs to 1199 residues: MLDVNKFEYMKIGLASPEKIRSWSYGEVKKPETINYRTLKPEKDGLFCERIFGPTKDWECHCGKYKRVRYKGVVCDRCGVEVTRSKVRRERMGHIELAAPVSHIWYFKGIPSRMGLVLDMSPRALEEVIYFASYVVTDPGDTPLEKKQLLSEKEYRAYREKYGQSFQASMGAEAIKKLLQDIDLDKEVAALKEELKTAQGQRRARIIKRLEVLEAFRSSGNDPAWMVLDVLPVIPPELRPMVQLDGGRFATSDLNDLYRRVINRNNRLKRLLDLGAPNIIVQNEKRMLQEAVDALIDNGRRGRPVTGPGNRPLKSLSHMLKGKQGRFRQNLLGKRVDYSGRSVIVVGPNLKMYQCGLPKEMALELFKPFVMKELVERGLAHNIKSAKRKIERVHPEVWDVLEDVIKEHPVLLNRAPTLHRLGIQAFEPTLVEGRAIRLHPLVCTAYNADFDGDQMAVHVPLSAEAQAEARLLMLAAQNILNPKDGKPVVTPSQDMVLGNYYLTMEREGAIGEGMVFKDTDEALLAYHNGYVHLHSRIAIHAGSLKNETFTEEQNNKLLLTTVGKLIFNEILPNSFPYINEPTTENIEGRTPDKYFLDKGVNVREEIRKRELVPPFKKKVLGQIIAEVFKRFKITETSKMLDRMKDLGFQYSTKAGITIGVADIVVLPEKQEILDEAQAKVDTVLKQFRRGLITDEERYERVISIWSAAKDKIQDRLMKSLDKRNPIFMMSDSGARGNASNFTQLAGMRGLMANPAGRIIELPIKSSFREGLTVLEYFISTHGARKGLADTALKTADSGYLTRRLVDVAQDVIVREEDCGTDRGILARALTDGTEVVVKLEERLVGRYAHKTVRHPETGEVIVRKDEMITEDIANEIMKAGITEVWIRSVFACNTRHGVCKKCYGRNMATGMDVEVGEAVGIIAAQSIGEPGTQLTMRTFHTGGVAGDDITQGLPRVQELFEARNPKGQAVISEIDGTVISINKTRDNQYEVVVQGEVETRTYVAPYNARLKVEEGQRVERGQELTEGSVDPKQLLRVRDITSVQEYLLREVQKVYRMQGVEISDKHIEVMVRQMLRKVRVIDAGDTDVLPGTLLDVHQFTDVNAKALREGKRPATARQVLLGITKASLETDSFLSAASFQETTRVLTDAAIKGKRDELLGLKENVIIGKLVPAGTGMARYRKVKPAVKKETASDTVSSK.

Positions 60, 62, 75, and 78 each coordinate Zn(2+). Mg(2+) contacts are provided by Asp-449, Asp-451, and Asp-453. Zn(2+) contacts are provided by Cys-818, Cys-892, Cys-899, and Cys-902.

It belongs to the RNA polymerase beta' chain family. In terms of assembly, the RNAP catalytic core consists of 2 alpha, 1 beta, 1 beta' and 1 omega subunit. When a sigma factor is associated with the core the holoenzyme is formed, which can initiate transcription. Mg(2+) is required as a cofactor. Requires Zn(2+) as cofactor.

It catalyses the reaction RNA(n) + a ribonucleoside 5'-triphosphate = RNA(n+1) + diphosphate. Its function is as follows. DNA-dependent RNA polymerase catalyzes the transcription of DNA into RNA using the four ribonucleoside triphosphates as substrates. This chain is DNA-directed RNA polymerase subunit beta', found in Geobacillus kaustophilus (strain HTA426).